A 96-amino-acid chain; its full sequence is Co-chaperonin GroES (96 aa).

Belongs to the GroES chaperonin family. In terms of assembly, heptamer of 7 subunits arranged in a ring. Interacts with the chaperonin GroEL.

It localises to the cytoplasm. In terms of biological role, together with the chaperonin GroEL, plays an essential role in assisting protein folding. The GroEL-GroES system forms a nano-cage that allows encapsulation of the non-native substrate proteins and provides a physical environment optimized to promote and accelerate protein folding. GroES binds to the apical surface of the GroEL ring, thereby capping the opening of the GroEL channel. This Idiomarina loihiensis (strain ATCC BAA-735 / DSM 15497 / L2-TR) protein is Co-chaperonin GroES.